Here is a 998-residue protein sequence, read N- to C-terminus: Ephrin type-B receptor 3 (998 aa).

The first 33 residues, 1–33, serve as a signal peptide directing secretion; that stretch reads MARARPPPPPSPPPGLLPLLPPLLLLPLLLLPA. Topologically, residues 34–559 are extracellular; it reads GCRALEETLM…AQQLQEQLPL (526 aa). An Eph LBD domain is found at 39–217; the sequence is EETLMDTKWV…FYKKCASTTA (179 aa). An intrachain disulfide couples cysteine 81 to cysteine 199. Fibronectin type-III domains follow at residues 339-451 and 452-545; these read VPSP…TNQA and APSE…TTSE. 2 N-linked (GlcNAc...) asparagine glycosylation sites follow: asparagine 351 and asparagine 445. A helical transmembrane segment spans residues 560-580; it reads IVGSATAGLVFVVAVVVIAIV. Residues 581–998 lie on the Cytoplasmic side of the membrane; the sequence is CLRKQRHGSD…QMNQTLPVQV (418 aa). Tyrosine 614 carries the post-translational modification Phosphotyrosine; by autocatalysis. The Protein kinase domain occupies 633–896; it reads VKIEEVIGAG…QIVNTLDKLI (264 aa). ATP is bound by residues 639 to 647 and lysine 665; that span reads IGAGEFGEV. The active-site Proton acceptor is aspartate 758. In terms of domain architecture, SAM spans 925–989; it reads TTFTTVGDWL…LSSIQDMRLQ (65 aa). The PDZ-binding signature appears at 996–998; sequence VQV.

Belongs to the protein kinase superfamily. Tyr protein kinase family. Ephrin receptor subfamily. As to quaternary structure, heterotetramer upon binding of the ligand. The heterotetramer is composed of an ephrin dimer and a receptor dimer. Oligomerization is probably required to induce biological responses. In terms of processing, phosphorylated. Autophosphorylates upon ligand-binding. Autophosphorylation on Tyr-614 is required for interaction with SH2 domain-containing proteins. Ubiquitinated by RNF186, mainly through 'Lys-48' and 'Lys-63'-linked polyubiquitin chains. Ubiquitous.

Its subcellular location is the cell membrane. It localises to the cell projection. The protein resides in the dendrite. It carries out the reaction L-tyrosyl-[protein] + ATP = O-phospho-L-tyrosyl-[protein] + ADP + H(+). Functionally, receptor tyrosine kinase which binds promiscuously transmembrane ephrin-B family ligands residing on adjacent cells, leading to contact-dependent bidirectional signaling into neighboring cells. The signaling pathway downstream of the receptor is referred to as forward signaling while the signaling pathway downstream of the ephrin ligand is referred to as reverse signaling. Generally has an overlapping and redundant function with EPHB2. Like EPHB2, functions in axon guidance during development regulating for instance the neurons forming the corpus callosum and the anterior commissure, 2 major interhemispheric connections between the temporal lobes of the cerebral cortex. In addition to its role in axon guidance also plays an important redundant role with other ephrin-B receptors in development and maturation of dendritic spines and the formation of excitatory synapses. Controls other aspects of development through regulation of cell migration and positioning. This includes angiogenesis, palate development and thymic epithelium development for instance. Forward and reverse signaling through the EFNB2/EPHB3 complex also regulate migration and adhesion of cells that tubularize the urethra and septate the cloaca. Finally, plays an important role in intestinal epithelium differentiation segregating progenitor from differentiated cells in the crypt. This chain is Ephrin type-B receptor 3 (EPHB3), found in Homo sapiens (Human).